Reading from the N-terminus, the 215-residue chain is Large ribosomal subunit protein uL4 (215 aa).

The segment at 43–97 (RRQGTHSTKTRAEVSGGGKKPWRQKGTGRARAGSTRSPIWVGGGKTHTPKPRDYS) is disordered.

The protein belongs to the universal ribosomal protein uL4 family. As to quaternary structure, part of the 50S ribosomal subunit.

In terms of biological role, one of the primary rRNA binding proteins, this protein initially binds near the 5'-end of the 23S rRNA. It is important during the early stages of 50S assembly. It makes multiple contacts with different domains of the 23S rRNA in the assembled 50S subunit and ribosome. Forms part of the polypeptide exit tunnel. This is Large ribosomal subunit protein uL4 from Brachyspira hyodysenteriae (strain ATCC 49526 / WA1).